Here is a 291-residue protein sequence, read N- to C-terminus: Quinol oxidase subunit 2 (291 aa).

A signal peptide spans 1-28 (MQLKKAFWKLASLLPXSLLLFLGGCDKK). 2 helical membrane-spanning segments follow: residues 49-69 (SFLLMSLIIAIVFILFTVILI) and 91-111 (LEIIWTLVPVIIVIALSIPTV).

The protein belongs to the cytochrome c oxidase subunit 2 family.

The protein resides in the cell membrane. It catalyses the reaction 2 a quinol + O2 = 2 a quinone + 2 H2O. Catalyzes quinol oxidation with the concomitant reduction of oxygen to water. Subunit II transfers the electrons from a quinol to the binuclear center of the catalytic subunit I. The sequence is that of Quinol oxidase subunit 2 from Bacillus cereus (strain ATCC 10987 / NRS 248).